A 92-amino-acid polypeptide reads, in one-letter code: Small ribosomal subunit protein bS18 (92 aa).

It belongs to the bacterial ribosomal protein bS18 family. As to quaternary structure, part of the 30S ribosomal subunit. Forms a tight heterodimer with protein bS6.

Binds as a heterodimer with protein bS6 to the central domain of the 16S rRNA, where it helps stabilize the platform of the 30S subunit. In Ralstonia nicotianae (strain ATCC BAA-1114 / GMI1000) (Ralstonia solanacearum), this protein is Small ribosomal subunit protein bS18.